The following is a 316-amino-acid chain: Protoheme IX farnesyltransferase (316 aa).

The next 9 membrane-spanning stretches (helical) occupy residues 29–49 (IIPL…EGRV), 54–74 (LLIT…LNCI), 102–122 (LIFA…FVNV), 123–143 (LSGC…THWL), 151–171 (IVIG…AVTG), 179–199 (VLFA…ALMI), 224–241 (IWYY…LVYP), 245–267 (LGIL…AWQL), and 283–303 (FSIF…LPVT).

The protein belongs to the UbiA prenyltransferase family. Protoheme IX farnesyltransferase subfamily.

The protein resides in the cell inner membrane. The catalysed reaction is heme b + (2E,6E)-farnesyl diphosphate + H2O = Fe(II)-heme o + diphosphate. It functions in the pathway porphyrin-containing compound metabolism; heme O biosynthesis; heme O from protoheme: step 1/1. Converts heme B (protoheme IX) to heme O by substitution of the vinyl group on carbon 2 of heme B porphyrin ring with a hydroxyethyl farnesyl side group. The protein is Protoheme IX farnesyltransferase of Synechocystis sp. (strain ATCC 27184 / PCC 6803 / Kazusa).